Reading from the N-terminus, the 317-residue chain is Probable arabinan endo-1,5-alpha-L-arabinosidase C (317 aa).

Residues 1-17 form the signal peptide; that stretch reads MLSFLAALSLPLALVNA. Catalysis depends on aspartate 32, which acts as the Proton acceptor. N-linked (GlcNAc...) asparagine glycosylation occurs at asparagine 190. Glutamate 198 acts as the Proton donor in catalysis.

Belongs to the glycosyl hydrolase 43 family.

It localises to the secreted. It catalyses the reaction Endohydrolysis of (1-&gt;5)-alpha-arabinofuranosidic linkages in (1-&gt;5)-arabinans.. Its pathway is glycan metabolism; L-arabinan degradation. In terms of biological role, endo-1,5-alpha-L-arabinanase involved in degradation of pectin. Its preferred substrate is linear 1,5-alpha-L-arabinan. This is Probable arabinan endo-1,5-alpha-L-arabinosidase C (abnC) from Aspergillus flavus (strain ATCC 200026 / FGSC A1120 / IAM 13836 / NRRL 3357 / JCM 12722 / SRRC 167).